Here is a 255-residue protein sequence, read N- to C-terminus: Flap endonuclease Xni (255 aa).

Residue D105 coordinates Mg(2+). A 5'-3' exonuclease domain is found at 163–253 (QYQMLDFIAL…NLKQFRINPI (91 aa)). The K(+) site is built by L172, A173, P181, I183, and I186. The segment at 185–190 (GIGPKS) is interaction with DNA.

This sequence belongs to the Xni family. Requires Mg(2+) as cofactor. It depends on K(+) as a cofactor.

Has flap endonuclease activity. During DNA replication, flap endonucleases cleave the 5'-overhanging flap structure that is generated by displacement synthesis when DNA polymerase encounters the 5'-end of a downstream Okazaki fragment. The sequence is that of Flap endonuclease Xni from Shewanella frigidimarina (strain NCIMB 400).